Reading from the N-terminus, the 785-residue chain is Altered inheritance of mitochondria protein 3-2 (785 aa).

3 disordered regions span residues 33 to 122 (TGYQ…QPYM), 142 to 406 (QQVA…SENL), and 418 to 785 (NVDV…RLHK). Residues 91–102 (GSSGNSANGSSA) are compositionally biased toward low complexity. 2 stretches are compositionally biased toward polar residues: residues 103–122 (TIPT…QPYM) and 143–199 (QVAT…QLNI). Residues 249 to 260 (KPYDWEEQKTTK) are compositionally biased toward basic and acidic residues. Polar residues-rich tracts occupy residues 283-310 (SRQG…TTTG), 350-366 (ATNN…QNTK), 375-388 (TNKS…SNVM), 395-405 (QMNTKANSSEN), and 455-465 (SSISRDNYNSI). Over residues 478-497 (NTGEREGAQELKADIAERSQ) the composition is skewed to basic and acidic residues. The segment covering 527–556 (AQTSSDIPQKSSLVTDESNISVPNKSQQPM) has biased composition (polar residues). 2 stretches are compositionally biased toward basic and acidic residues: residues 587 to 613 (KSLE…EQLK) and 624 to 637 (KNMK…DNKN). Over residues 659 to 671 (SLTSEGNHMNLNT) the composition is skewed to polar residues. 2 stretches are compositionally biased toward basic and acidic residues: residues 672 to 686 (EKGK…DESK) and 700 to 710 (FKREELSKEVV).

Belongs to the AIM3 family.

It is found in the membrane raft. The chain is Altered inheritance of mitochondria protein 3-2 (AIM3-2) from Candida glabrata (strain ATCC 2001 / BCRC 20586 / JCM 3761 / NBRC 0622 / NRRL Y-65 / CBS 138) (Yeast).